A 444-amino-acid chain; its full sequence is Phosphoglucosamine mutase (444 aa).

Serine 103 functions as the Phosphoserine intermediate in the catalytic mechanism. The Mg(2+) site is built by serine 103, aspartate 241, aspartate 243, and aspartate 245. Serine 103 is modified (phosphoserine).

This sequence belongs to the phosphohexose mutase family. Requires Mg(2+) as cofactor. Activated by phosphorylation.

The catalysed reaction is alpha-D-glucosamine 1-phosphate = D-glucosamine 6-phosphate. In terms of biological role, catalyzes the conversion of glucosamine-6-phosphate to glucosamine-1-phosphate. The polypeptide is Phosphoglucosamine mutase (Deinococcus radiodurans (strain ATCC 13939 / DSM 20539 / JCM 16871 / CCUG 27074 / LMG 4051 / NBRC 15346 / NCIMB 9279 / VKM B-1422 / R1)).